Consider the following 126-residue polypeptide: Large ribosomal subunit protein eL18 (126 aa).

The protein belongs to the eukaryotic ribosomal protein eL18 family.

The sequence is that of Large ribosomal subunit protein eL18 from Methanosarcina mazei (strain ATCC BAA-159 / DSM 3647 / Goe1 / Go1 / JCM 11833 / OCM 88) (Methanosarcina frisia).